We begin with the raw amino-acid sequence, 336 residues long: Adenylate isopentenyltransferase 3, chloroplastic (336 aa).

The N-terminal 55 residues, 1-55 (MIMKISMAMCKQPLPPSPTLDFPPARFGPNMLTLNPYGPKDKVVVIMGATGTGKS), are a transit peptide targeting the chloroplast. 48 to 55 (GATGTGKS) contacts ATP. Cysteine 333 bears the Cysteine methyl ester mark. Cysteine 333 carries the S-farnesyl cysteine lipid modification. Residues 334–336 (LVA) constitute a propeptide, removed in mature form.

It belongs to the IPP transferase family. In terms of processing, farnesylated. In terms of tissue distribution, expressed the phloem companion cells.

The protein localises to the plastid. It is found in the chloroplast. Its subcellular location is the nucleus membrane. It localises to the cytoplasm. It carries out the reaction dimethylallyl diphosphate + ADP = N(6)-(dimethylallyl)adenosine 5'-diphosphate + diphosphate. The catalysed reaction is dimethylallyl diphosphate + ATP = N(6)-(dimethylallyl)adenosine 5'-triphosphate + diphosphate. Functionally, involved in cytokinin biosynthesis. Catalyzes the transfer of an isopentenyl group from dimethylallyl diphosphate (DMAPP) to ATP and ADP. The sequence is that of Adenylate isopentenyltransferase 3, chloroplastic (IPT3) from Arabidopsis thaliana (Mouse-ear cress).